Here is a 318-residue protein sequence, read N- to C-terminus: Gamma-glutamyl hydrolase (318 aa).

Residues 1–24 (MASPGCLLCVLGLLLCGAASLELS) form the signal peptide. Residues 25-318 (RPHGDTAKKP…SSFQQCYIFD (294 aa)) enclose the Gamma-glutamyl hydrolase domain. A glycan (N-linked (GlcNAc...) asparagine) is linked at Asn116. The active-site Nucleophile is Cys134. N-linked (GlcNAc...) asparagine glycosylation is found at Asn163 and Asn203. Residue His244 is the Proton donor of the active site. Residue Asn307 is glycosylated (N-linked (GlcNAc...) asparagine; partial).

The protein belongs to the peptidase C26 family. As to quaternary structure, homodimer.

Its subcellular location is the secreted. The protein resides in the extracellular space. The protein localises to the lysosome. It is found in the melanosome. The catalysed reaction is (6S)-5,6,7,8-tetrahydrofolyl-(gamma-L-Glu)(n) + (n-1) H2O = (6S)-5,6,7,8-tetrahydrofolate + (n-1) L-glutamate. Functionally, hydrolyzes the polyglutamate sidechains of pteroylpolyglutamates. Progressively removes gamma-glutamyl residues from pteroylpoly-gamma-glutamate to yield pteroyl-alpha-glutamate (folic acid) and free glutamate. May play an important role in the bioavailability of dietary pteroylpolyglutamates and in the metabolism of pteroylpolyglutamates and antifolates. This is Gamma-glutamyl hydrolase from Homo sapiens (Human).